The sequence spans 459 residues: Alcohol acyl transferase 1 allele GSd (459 aa).

Active-site proton acceptor residues include histidine 164 and asparagine 385.

Belongs to the plant acyltransferase family. Expressed at very low levels in the cortex and skin of ripe fruit.

Involved in the biosynthesis of volatile esters which confer ripe apple fruit flavor. Alcohol acyl transferase that can use a wide range of alcohols as substrate to produce esters. The sequence is that of Alcohol acyl transferase 1 allele GSd from Malus domestica (Apple).